A 99-amino-acid polypeptide reads, in one-letter code: Small ribosomal subunit protein uS14m (99 aa).

This sequence belongs to the universal ribosomal protein uS14 family.

The protein resides in the mitochondrion. The sequence is that of Small ribosomal subunit protein uS14m (RPS14) from Prototheca wickerhamii.